Consider the following 835-residue polypeptide: Cap-specific mRNA (nucleoside-2'-O-)-methyltransferase 1 (835 aa).

Positions 1–66 (MKRRNDSECT…TEGKQRSSDS (66 aa)) are disordered. Residues 2–19 (KRRNDSECTAPLKKQKKR) carry the Bipartite nuclear localization signal motif. 5 positions are modified to phosphoserine: serine 28, serine 31, serine 53, serine 66, and serine 91. Positions 57-66 (TEGKQRSSDS) are enriched in basic and acidic residues. Residues 87–133 (YNSVSQKLMAKMGFKEGEGLGKYSQGRKDIVEASNQKGRRGLGLTLQ) form the G-patch domain. Residue lysine 108 is modified to N6-acetyllysine. Residues 203–207 (KSVFD) and arginine 218 contribute to the substrate site. Positions 231 to 450 (FFLNRAAMKM…ERYVVCKGLK (220 aa)) constitute a RrmJ-type SAM-dependent 2'-O-MTase domain. Asparagine 234 serves as a coordination point for S-adenosyl-L-methionine. Lysine 239 is an active-site residue. Residues 277–283 (CAGPGGF) and 335–336 (DI) each bind S-adenosyl-L-methionine. The active site involves aspartate 364. 374–376 (NLQ) is a binding site for substrate. Lysine 404 (proton acceptor) is an active-site residue. Asparagine 439 is a binding site for substrate. The interval 727–835 (SSGTPKLSYT…VLSFIQTHSA (109 aa)) is interaction with POLR2A. The region spanning 752-786 (RTVNEPWTMGFSKSFKRKFFYNKKTKNSTFDLPAD) is the WW domain.

In terms of assembly, interacts with POLR2A (via C-terminus).

It is found in the nucleus. It catalyses the reaction a 5'-end (N(7)-methyl 5'-triphosphoguanosine)-ribonucleoside in mRNA + S-adenosyl-L-methionine = a 5'-end (N(7)-methyl 5'-triphosphoguanosine)-(2'-O-methyl-ribonucleoside) in mRNA + S-adenosyl-L-homocysteine + H(+). Its function is as follows. S-adenosyl-L-methionine-dependent methyltransferase that mediates mRNA cap1 2'-O-ribose methylation to the 5'-cap structure of mRNAs. Methylates the ribose of the first nucleotide of a m(7)GpppG-capped mRNA and small nuclear RNA (snRNA) to produce m(7)GpppRm (cap1). Displays a preference for cap0 transcripts. Cap1 modification is linked to higher levels of translation. May be involved in the interferon response pathway. The protein is Cap-specific mRNA (nucleoside-2'-O-)-methyltransferase 1 (CMTR1) of Bos taurus (Bovine).